The following is a 328-amino-acid chain: Phosphate acyltransferase (328 aa).

Belongs to the PlsX family. As to quaternary structure, homodimer. Probably interacts with PlsY.

The protein localises to the cytoplasm. It carries out the reaction a fatty acyl-[ACP] + phosphate = an acyl phosphate + holo-[ACP]. Its pathway is lipid metabolism; phospholipid metabolism. Catalyzes the reversible formation of acyl-phosphate (acyl-PO(4)) from acyl-[acyl-carrier-protein] (acyl-ACP). This enzyme utilizes acyl-ACP as fatty acyl donor, but not acyl-CoA. The polypeptide is Phosphate acyltransferase (Staphylococcus aureus (strain USA300)).